The sequence spans 199 residues: Urease accessory protein UreG (199 aa).

8–15 contributes to the GTP binding site; it reads GPVGSGKT.

Belongs to the SIMIBI class G3E GTPase family. UreG subfamily. Homodimer. UreH, UreF and UreG form a complex that acts as a GTP-hydrolysis-dependent molecular chaperone, activating the urease apoprotein by helping to assemble the nickel containing metallocenter of UreC. The UreE protein probably delivers the nickel.

The protein localises to the cytoplasm. Functionally, facilitates the functional incorporation of the urease nickel metallocenter. This process requires GTP hydrolysis, probably effectuated by UreG. This chain is Urease accessory protein UreG, found in Helicobacter pylori (strain P12).